We begin with the raw amino-acid sequence, 278 residues long: Large ribosomal subunit protein uL2 (278 aa).

Positions Trp-214–Ser-278 are disordered.

Belongs to the universal ribosomal protein uL2 family. In terms of assembly, part of the 50S ribosomal subunit. Forms a bridge to the 30S subunit in the 70S ribosome.

One of the primary rRNA binding proteins. Required for association of the 30S and 50S subunits to form the 70S ribosome, for tRNA binding and peptide bond formation. It has been suggested to have peptidyltransferase activity; this is somewhat controversial. Makes several contacts with the 16S rRNA in the 70S ribosome. The protein is Large ribosomal subunit protein uL2 of Chelativorans sp. (strain BNC1).